Here is a 109-residue protein sequence, read N- to C-terminus: MKLVTSITVLLSLGIMGDAKTTQPNSMESNEEEPVHLPCNHSTISGTDYIHWYRQLPSQGPEYVIHGLTSNVNNRMASLAIAEDRKSSTLILHRATLRDAAVYYCILRD.

An N-terminal signal peptide occupies residues 1–19 (MKLVTSITVLLSLGIMGDA). The Ig-like domain occupies 20–109 (KTTQPNSMES…AAVYYCILRD (90 aa)). C39 and C105 are disulfide-bonded. N40 is a glycosylation site (N-linked (GlcNAc...) asparagine).

In terms of assembly, alpha-beta TR is a heterodimer composed of an alpha and beta chain; disulfide-linked. The alpha-beta TR is associated with the transmembrane signaling CD3 coreceptor proteins to form the TR-CD3 (TcR or TCR). The assembly of alpha-beta TR heterodimers with CD3 occurs in the endoplasmic reticulum where a single alpha-beta TR heterodimer associates with one CD3D-CD3E heterodimer, one CD3G-CD3E heterodimer and one CD247 homodimer forming a stable octameric structure. CD3D-CD3E and CD3G-CD3E heterodimers preferentially associate with TR alpha and TR beta chains, respectively. The association of the CD247 homodimer is the last step of TcR assembly in the endoplasmic reticulum and is required for transport to the cell surface.

The protein localises to the cell membrane. Functionally, v region of the variable domain of T cell receptor (TR) alpha chain that participates in the antigen recognition. Alpha-beta T cell receptors are antigen specific receptors which are essential to the immune response and are present on the cell surface of T lymphocytes. Recognize peptide-major histocompatibility (MH) (pMH) complexes that are displayed by antigen presenting cells (APC), a prerequisite for efficient T cell adaptive immunity against pathogens. Binding of alpha-beta TR to pMH complex initiates TR-CD3 clustering on the cell surface and intracellular activation of LCK that phosphorylates the ITAM motifs of CD3G, CD3D, CD3E and CD247 enabling the recruitment of ZAP70. In turn ZAP70 phosphorylates LAT, which recruits numerous signaling molecules to form the LAT signalosome. The LAT signalosome propagates signal branching to three major signaling pathways, the calcium, the mitogen-activated protein kinase (MAPK) kinase and the nuclear factor NF-kappa-B (NF-kB) pathways, leading to the mobilization of transcription factors that are critical for gene expression and essential for T cell growth and differentiation. The T cell repertoire is generated in the thymus, by V-(D)-J rearrangement. This repertoire is then shaped by intrathymic selection events to generate a peripheral T cell pool of self-MH restricted, non-autoaggressive T cells. Post-thymic interaction of alpha-beta TR with the pMH complexes shapes TR structural and functional avidity. The protein is T cell receptor alpha variable 26-2 of Homo sapiens (Human).